A 31-amino-acid chain; its full sequence is Cytochrome b6-f complex subunit 6 (31 aa).

The helical transmembrane segment at 3 to 23 threads the bilayer; that stretch reads VAIDYFLLVGFCFAVTSGLWI.

The protein belongs to the PetL family. In terms of assembly, the 4 large subunits of the cytochrome b6-f complex are cytochrome b6, subunit IV (17 kDa polypeptide, PetD), cytochrome f and the Rieske protein, while the 4 small subunits are PetG, PetL, PetM and PetN. The complex functions as a dimer.

The protein resides in the plastid. It localises to the chloroplast thylakoid membrane. Component of the cytochrome b6-f complex, which mediates electron transfer between photosystem II (PSII) and photosystem I (PSI), cyclic electron flow around PSI, and state transitions. PetL is important for photoautotrophic growth as well as for electron transfer efficiency and stability of the cytochrome b6-f complex. This is Cytochrome b6-f complex subunit 6 from Phaeodactylum tricornutum (strain CCAP 1055/1).